Consider the following 477-residue polypeptide: PTS system glucose-specific EIICB component (477 aa).

The PTS EIIC type-1 domain occupies 1-388 (MFKNVFANLQ…FNLDTPGREN (388 aa)). 10 helical membrane-spanning segments follow: residues 15 to 35 (SLMLPVSVLPIAGILLGIGSA), 51 to 71 (TGGSVFSNMPLIFAIGVALGF), 76 to 96 (GVAALAAVVSYGILIQTLTAV), 112 to 132 (HLSDTGILGGIIAGAISAYMF), 152 to 172 (FVPIISGLSAILIGVILSLIW), 191 to 211 (PILAFALYGLVERALVPFGLH), 250 to 270 (LSGGFIFKMYGLPGAALAIWH), 280 to 300 (IGSIMISAALTAFLTGITEPI), 304 to 324 (FIIVAPVLYVIHAILAGLSFP), and 357 to 377 (FPIIGILYGLLYYILFYLFII). In terms of domain architecture, PTS EIIB type-1 spans 399 to 477 (NEIAPYIITA…TAMDECIKNI (79 aa)). The active-site Phosphocysteine intermediate; for EIIB activity is Cys-421. Cys-421 carries the phosphocysteine modification.

The protein resides in the cell inner membrane. It catalyses the reaction N(pros)-phospho-L-histidyl-[protein] + D-glucose(out) = D-glucose 6-phosphate(in) + L-histidyl-[protein]. Functionally, the phosphoenolpyruvate-dependent sugar phosphotransferase system (sugar PTS), a major carbohydrate active transport system, catalyzes the phosphorylation of incoming sugar substrates concomitantly with their translocation across the cell membrane. The enzyme II complex composed of PtsG and Crr is involved in glucose transport. This is PTS system glucose-specific EIICB component (ptsG) from Buchnera aphidicola subsp. Acyrthosiphon pisum (strain APS) (Acyrthosiphon pisum symbiotic bacterium).